Consider the following 88-residue polypeptide: Antitoxin HipB (88 aa).

The HTH cro/C1-type domain maps to 17–71 (MKLVRQQNGWTQSELAKKIGIKQATISNFENNPDNTTLTTFFKILQSLELSMTLC). The segment at residues 21–47 (RQQNGWTQSELAKKIGIKQATISNFEN) is a DNA-binding region (H-T-H motif).

Homodimer. Binds operator DNA sites in the absence of HipA, inducing a 70 degree bend in consecutive operators and deforming DNA between the operators so that HipB dimers bind on opposite faces of the DNA. Forms a HipA(2)HipB(2) heterotetramer which can interact with a single operator site on DNA, inducing a 70 degree bend. When 2 operators are present each HipB dimer contacts 1 HipA molecule, which are brought together by the DNA bend and dimerize, blocking the HipA active site and inactivating its toxic activity. HipA-HipB-induced bending also distorts the -35 and -10 boxes of the promoter and probably prevents sigma-factor binding, and additionally bound HipB and HipA block RNA polymerase access to the -35 box, thus repressing the operon. This complex also blocks the toxic activity of HipA. Mutations present in allele hipA7 (G22S and D291A) decrease the affinity of HipA for HipB. Degraded by Lon protease in vivo; half-life is 17 minutes in wild-type cells and over 200 minutes in a lon deletion strain. In vitro degradation by Lon is Mg(2+)-ATP-dependent.

Degraded by Lon protease; degradation is inhibited in a HipA-HipB complex and when bound to the operator consensus sequence dsDNA. In terms of biological role, antitoxin component of a type II toxin-antitoxin (TA) system. Neutralizes the toxic effect of cognate toxin HipA. Also neutralizes the toxic effect of non-cognate toxin YjjJ. Binds to operator sites with the consensus sequence 5-'TATCCN(8)GGATA-3' to repress the hipBA operon promoter; binding of HipB(2) to DNA induces a 70 degree bend. This forces HipA dimerization, which blocks HipA's active site and thus its toxic action. May play a role in biofilm formation. The sequence is that of Antitoxin HipB (hipB) from Escherichia coli (strain K12).